We begin with the raw amino-acid sequence, 200 residues long: Cysteine dioxygenase type 1 (200 aa).

His86, His88, and His140 together coordinate Fe cation. Residues 93 to 157 (CFLKLLQGNL…TEPAVSLHLY (65 aa)) constitute a cross-link (3'-(S-cysteinyl)-tyrosine (Cys-Tyr)).

This sequence belongs to the cysteine dioxygenase family. Monomer. The cofactor is Fe(2+). Ni(2+) serves as cofactor. Zn(2+) is required as a cofactor. The thioether cross-link between Cys-93 and Tyr-157 plays a structural role through stabilizing the Fe(2+) ion, and prevents the production of highly damaging free hydroxyl radicals by holding the oxygen radical via hydroxyl hydrogen. In terms of tissue distribution, highest expression in liver. Also expressed in kidney, lung, brain and small intestine.

It catalyses the reaction L-cysteine + O2 = 3-sulfino-L-alanine + H(+). The protein operates within organosulfur biosynthesis; taurine biosynthesis; hypotaurine from L-cysteine: step 1/2. Functionally, catalyzes the oxidation of cysteine to cysteine sulfinic acid with addition of molecular dioxygen. The protein is Cysteine dioxygenase type 1 (Cdo1) of Mus musculus (Mouse).